The chain runs to 66 residues: Large ribosomal subunit protein bL35 (66 aa).

Belongs to the bacterial ribosomal protein bL35 family.

The sequence is that of Large ribosomal subunit protein bL35 from Synechococcus sp. (strain ATCC 27144 / PCC 6301 / SAUG 1402/1) (Anacystis nidulans).